The chain runs to 569 residues: MAVSERRGLSGESPTQCRWGYLSLLVLTLSGCSGRIHRLTLTGEKRADIQLNSFGFYTNGSLEVELSLLRLSLQETEKKLPKVGFSLSRVRSGSVRSYSRRNSHECPLDRNSSNFLVLFLINIKDLQVQVRKYGEQKLFISPGLLPEAPTQSGPPKPDPAGTPKDNHVIHPSPTEMSAVKENQTAPQVSGDKTTPGEHRHSSERQPPTQDPSGKEKDQVLGLGHLNDSYNFSFHIVISSRAEEGQYSLNFHNCHNSIPGQEQPFDLTVMIREKNPEGFLSAAEIPLFKLYLIMSACFLAADIFWVSVLCKNTYSVFKIHWLMAALAFTKSVSLLFHSINYYFINSQGHPIEGLAVMHYITHLLKGALLFITIALIGSGWAFVKYMLSDKEKKIFGIVIPLQVLANVAYIVIESREEGASDYGLWKEILFLVDLICCGAILFPVVWSIRHLQDASGTDGKVAVNLARLKLFRHYYVMVICYIYFTRIIAILLQVAVPFQWQWLYQLLVESSTLAFFVLTGYKFQPAGDNPYLQLPQEDEEDVQMEQVMTDSGFREGLSKVNKTASGRELL.

A signal peptide spans 1 to 34 (MAVSERRGLSGESPTQCRWGYLSLLVLTLSGCSG). N59, N111, and N182 each carry an N-linked (GlcNAc...) asparagine glycan. The segment at 144–219 (LLPEAPTQSG…DPSGKEKDQV (76 aa)) is disordered. Polar residues predominate over residues 180–192 (KENQTAPQVSGDK). The span at 194–203 (TPGEHRHSSE) shows a compositional bias: basic and acidic residues. Residues N226 and N230 are each glycosylated (N-linked (GlcNAc...) asparagine). A run of 7 helical transmembrane segments spans residues 289-309 (LYLI…SVLC), 318-338 (IHWL…FHSI), 362-382 (LLKG…WAFV), 393-413 (IFGI…VIES), 427-447 (ILFL…VWSI), 475-495 (VMVI…QVAV), and 499-519 (WQWL…VLTG).

Belongs to the LU7TM family. High expression in spleen, lung, stomach, large and small intestine, and thymus.

It localises to the golgi apparatus. Its subcellular location is the cis-Golgi network membrane. It is found in the trans-Golgi network membrane. The protein localises to the golgi apparatus membrane. May play a role in intracellular immune modulation by activating NF-kappaB response and attenuating Toll-like-receptor response. Functionally, (Microbial infection) Plays an essential function in adeno-associated virus (AAV) transduction, across multiple serotypes except AAV5. May play a critical role in mediating the endosomal virus escape or in the AAV virions trafficking from endosomes to the nucleus. In Mus musculus (Mouse), this protein is Protein GPR108 (Gpr108).